A 217-amino-acid polypeptide reads, in one-letter code: Adenylate kinase (217 aa).

10-15 contacts ATP; sequence GAGKGT. Positions 30–59 are NMP; that stretch reads STGDMFRAAMKEETPLGLEAKSYIDKGELV. AMP is bound by residues T31, R36, 57–59, 85–88, and Q92; these read ELV and GFPR. The tract at residues 126–163 is LID; that stretch reads GRRICSVCGTTYHLVFNPPKTPGVCDKDGGDLYQRADD. R127 is an ATP binding site. Zn(2+)-binding residues include C130 and C133. 136–137 serves as a coordination point for ATP; the sequence is TY. Positions 150 and 153 each coordinate Zn(2+). R160 and R171 together coordinate AMP. Q199 is a binding site for ATP.

This sequence belongs to the adenylate kinase family. Monomer.

The protein resides in the cytoplasm. It catalyses the reaction AMP + ATP = 2 ADP. It functions in the pathway purine metabolism; AMP biosynthesis via salvage pathway; AMP from ADP: step 1/1. In terms of biological role, catalyzes the reversible transfer of the terminal phosphate group between ATP and AMP. Plays an important role in cellular energy homeostasis and in adenine nucleotide metabolism. The sequence is that of Adenylate kinase from Bacillus velezensis (strain DSM 23117 / BGSC 10A6 / LMG 26770 / FZB42) (Bacillus amyloliquefaciens subsp. plantarum).